A 116-amino-acid polypeptide reads, in one-letter code: Aspartate 1-decarboxylase (116 aa).

The Schiff-base intermediate with substrate; via pyruvic acid role is filled by serine 25. Pyruvic acid (Ser) is present on serine 25. Substrate is bound at residue threonine 57. Catalysis depends on tyrosine 58, which acts as the Proton donor. 73–75 (GAA) lines the substrate pocket.

It belongs to the PanD family. Heterooctamer of four alpha and four beta subunits. Pyruvate is required as a cofactor. Post-translationally, is synthesized initially as an inactive proenzyme, which is activated by self-cleavage at a specific serine bond to produce a beta-subunit with a hydroxyl group at its C-terminus and an alpha-subunit with a pyruvoyl group at its N-terminus.

Its subcellular location is the cytoplasm. It carries out the reaction L-aspartate + H(+) = beta-alanine + CO2. It participates in cofactor biosynthesis; (R)-pantothenate biosynthesis; beta-alanine from L-aspartate: step 1/1. Its function is as follows. Catalyzes the pyruvoyl-dependent decarboxylation of aspartate to produce beta-alanine. This Phocaeicola vulgatus (strain ATCC 8482 / DSM 1447 / JCM 5826 / CCUG 4940 / NBRC 14291 / NCTC 11154) (Bacteroides vulgatus) protein is Aspartate 1-decarboxylase.